Reading from the N-terminus, the 43-residue chain is Protein PsbN (43 aa).

Residues 7-27 traverse the membrane as a helical segment; sequence VTIFISGLLVSFTGYALYIAF.

This sequence belongs to the PsbN family.

It localises to the plastid. The protein resides in the chloroplast thylakoid membrane. Its function is as follows. May play a role in photosystem I and II biogenesis. The polypeptide is Protein PsbN (Dioscorea bulbifera (Air potato)).